We begin with the raw amino-acid sequence, 234 residues long: Glucosamine-6-phosphate deaminase (234 aa).

Asp-62 acts as the Proton acceptor; for enolization step in catalysis. The active-site For ring-opening step is the Asn-128. His-130 serves as the catalytic Proton acceptor; for ring-opening step. Glu-135 serves as the catalytic For ring-opening step.

It belongs to the glucosamine/galactosamine-6-phosphate isomerase family. NagB subfamily.

The catalysed reaction is alpha-D-glucosamine 6-phosphate + H2O = beta-D-fructose 6-phosphate + NH4(+). The protein operates within amino-sugar metabolism; N-acetylneuraminate degradation; D-fructose 6-phosphate from N-acetylneuraminate: step 5/5. Catalyzes the reversible isomerization-deamination of glucosamine 6-phosphate (GlcN6P) to form fructose 6-phosphate (Fru6P) and ammonium ion. The chain is Glucosamine-6-phosphate deaminase from Streptococcus uberis (strain ATCC BAA-854 / 0140J).